We begin with the raw amino-acid sequence, 380 residues long: Epoxyqueuosine reductase (380 aa).

Catalysis depends on D139, which acts as the Proton donor. Residues 181–213 (IPFEPDDPLLDSCGDCTICVDRCPTSALVGNGQ) enclose the 4Fe-4S ferredoxin-type 1 domain. 8 residues coordinate [4Fe-4S] cluster: C193, C196, C199, C203, C219, C245, C248, and C252. A 4Fe-4S ferredoxin-type 2 domain is found at 234–263 (YRYKIGNRLYGCDTCQQVCPKNRGINTEQD).

Belongs to the QueG family. In terms of assembly, monomer. Requires cob(II)alamin as cofactor. [4Fe-4S] cluster serves as cofactor.

Its subcellular location is the cytoplasm. It carries out the reaction epoxyqueuosine(34) in tRNA + AH2 = queuosine(34) in tRNA + A + H2O. Its pathway is tRNA modification; tRNA-queuosine biosynthesis. Catalyzes the conversion of epoxyqueuosine (oQ) to queuosine (Q), which is a hypermodified base found in the wobble positions of tRNA(Asp), tRNA(Asn), tRNA(His) and tRNA(Tyr). The polypeptide is Epoxyqueuosine reductase (Staphylococcus aureus (strain NCTC 8325 / PS 47)).